Consider the following 182-residue polypeptide: UPF0215 protein Pcal_0119 (182 aa).

It belongs to the UPF0215 family.

The chain is UPF0215 protein Pcal_0119 from Pyrobaculum calidifontis (strain DSM 21063 / JCM 11548 / VA1).